A 250-amino-acid chain; its full sequence is Snake venom serine protease pictobin (250 aa).

Residues 1-11 (ANLLILQVSYA) form the signal peptide. The propeptide occupies 12–17 (QKSSEL). Residues 18–241 (VIGGDECNIN…HLHWILSIIA (224 aa)) form the Peptidase S1 domain. Disulfide bonds link cysteine 24–cysteine 155, cysteine 42–cysteine 58, cysteine 134–cysteine 202, cysteine 166–cysteine 181, and cysteine 192–cysteine 217. Histidine 57 acts as the Charge relay system in catalysis. Asparagine 71 and asparagine 95 each carry an N-linked (GlcNAc...) asparagine glycan. Aspartate 102 serves as the catalytic Charge relay system. N-linked (GlcNAc...) asparagine glycans are attached at residues asparagine 146 and asparagine 162. Serine 196 serves as the catalytic Charge relay system. Asparagine 243 is a glycosylation site (N-linked (GlcNAc...) asparagine).

This sequence belongs to the peptidase S1 family. Snake venom subfamily. In terms of assembly, monomer. In terms of tissue distribution, expressed by the venom gland.

It localises to the secreted. Functionally, snake venom serine protease that may impair the hemostatic system of the prey. This is Snake venom serine protease pictobin from Bothrops pictus (Desert lancehead).